Here is a 468-residue protein sequence, read N- to C-terminus: Ammonium transporter Amt2 (468 aa).

The next 12 helical transmembrane spans lie at 1–21 (MVGRMCVAVLIVLLLVATAGA), 39–59 (FVWALICGFLVMFMQAGFAML), 77–97 (LMDFAVGSLAFFAVGFALMMG), 123–143 (LWFFMLVFAATAATIVSGSIA), 156–176 (AVVSAVIYPIYGHWLWGGGWL), 194–214 (FAGSGVVHALGGYIALAAVML), 236–256 (LAFAVIGTFILWFGWFGFNAG), 268–288 (IIASNTNLAAAAGAVTAMAIT), 297–317 (VGMTCNGAVAGLVAITAPCAW), 321–341 (WSSVVIGTIAGFIATYGYWWL), 350–370 (VGAIPVHGFSGTWGLIALGIF), and 400–420 (LISAIVNFAWAFGTGFALFWI).

The protein belongs to the ammonia transporter channel (TC 1.A.11.2) family. In terms of assembly, homotrimer.

The protein resides in the cell membrane. Functionally, involved in the uptake of ammonium/ammonia (NH(4)(+)/NH(3)). Transport is electrogenic. The polypeptide is Ammonium transporter Amt2 (Archaeoglobus fulgidus (strain ATCC 49558 / DSM 4304 / JCM 9628 / NBRC 100126 / VC-16)).